The following is a 597-amino-acid chain: Centrosomal protein of 70 kDa (597 aa).

A disordered region spans residues 1–24 (MFPVAPKPQDSNQPSDRLMTEKQQ). Coiled coils occupy residues 66–179 (MRQN…QTEV) and 254–320 (TYKG…QELI). A TPR repeat occupies 483–516 (NGVYPRMNEVYTRLGEMNNAVRNLQELLELDSSS).

Directly interacts with tubulin-gamma; this interaction determines centrosomal localization.

It localises to the cytoplasm. The protein resides in the cytoskeleton. The protein localises to the microtubule organizing center. Its subcellular location is the centrosome. Its function is as follows. Plays a role in the organization of both preexisting and nascent microtubules in interphase cells. During mitosis, required for the organization and orientation of the mitotic spindle. In Macaca fascicularis (Crab-eating macaque), this protein is Centrosomal protein of 70 kDa (CEP70).